Here is a 389-residue protein sequence, read N- to C-terminus: Succinate--CoA ligase [ADP-forming] subunit beta (389 aa).

One can recognise an ATP-grasp domain in the interval 9–244 (KQLLAEYGIP…KTQEDPTEVI (236 aa)). ATP is bound by residues lysine 46, 53-55 (GRG), glycine 102, and glutamate 107. Mg(2+) contacts are provided by asparagine 199 and aspartate 213. Residues asparagine 264 and 321–323 (GIV) contribute to the substrate site.

Belongs to the succinate/malate CoA ligase beta subunit family. As to quaternary structure, heterotetramer of two alpha and two beta subunits. It depends on Mg(2+) as a cofactor.

It catalyses the reaction succinate + ATP + CoA = succinyl-CoA + ADP + phosphate. The enzyme catalyses GTP + succinate + CoA = succinyl-CoA + GDP + phosphate. It participates in carbohydrate metabolism; tricarboxylic acid cycle; succinate from succinyl-CoA (ligase route): step 1/1. Functionally, succinyl-CoA synthetase functions in the citric acid cycle (TCA), coupling the hydrolysis of succinyl-CoA to the synthesis of either ATP or GTP and thus represents the only step of substrate-level phosphorylation in the TCA. The beta subunit provides nucleotide specificity of the enzyme and binds the substrate succinate, while the binding sites for coenzyme A and phosphate are found in the alpha subunit. The chain is Succinate--CoA ligase [ADP-forming] subunit beta from Stenotrophomonas maltophilia (strain R551-3).